Consider the following 447-residue polypeptide: NADH-quinone oxidoreductase subunit N (447 aa).

A run of 13 helical transmembrane segments spans residues 4–24 (FAAL…MLAA), 27–47 (LPGL…VALA), 68–88 (LTGL…RPDG), 92–112 (EGPA…GAVH), 113–133 (AASL…LFVL), 146–166 (FLIL…LGHA), 181–201 (ALLT…LALV), 215–235 (PGAA…TALV), 245–265 (VWAL…NLAA), 280–300 (VGHA…APAA), 302–322 (LFYI…AALI), 342–362 (GAAM…AGFF), and 376–395 (AWAL…YYYL).

The protein belongs to the complex I subunit 2 family. NDH-1 is composed of 14 different subunits. Subunits NuoA, H, J, K, L, M, N constitute the membrane sector of the complex.

It localises to the cell inner membrane. It catalyses the reaction a quinone + NADH + 5 H(+)(in) = a quinol + NAD(+) + 4 H(+)(out). Its function is as follows. NDH-1 shuttles electrons from NADH, via FMN and iron-sulfur (Fe-S) centers, to quinones in the respiratory chain. The immediate electron acceptor for the enzyme in this species is believed to be ubiquinone. Couples the redox reaction to proton translocation (for every two electrons transferred, four hydrogen ions are translocated across the cytoplasmic membrane), and thus conserves the redox energy in a proton gradient. This chain is NADH-quinone oxidoreductase subunit N, found in Cereibacter sphaeroides (strain ATCC 17025 / ATH 2.4.3) (Rhodobacter sphaeroides).